A 284-amino-acid chain; its full sequence is MLFHRILPQYKTAISTYLTPTHCRLYIANLVTSRRMTNIEAAKKLAAYRAVDENLPPHAKVIGIGSGSTVVYVAERIGQLPNKDDFVCISTGFQSKQLIIDNGLKLGQIEQHPSIDIAFDGADEVDPQLNLIKGGGACLFQEKLVASASDKLIIVADFRKQSKHLGQNWRQGVPIEVVPIAFTKLINDLKRLGAKSVDLRQGGKAKAGPVITDNNNFILDADFGIIEDPKSLHLQLKQLVGVVDTGLFTGITEKVYFGEESGEVTTWDGVVTGSTTEEVIAESK.

It belongs to the ribose 5-phosphate isomerase family.

Its subcellular location is the cytoplasm. It catalyses the reaction aldehydo-D-ribose 5-phosphate = D-ribulose 5-phosphate. The protein operates within carbohydrate degradation; pentose phosphate pathway; D-ribose 5-phosphate from D-ribulose 5-phosphate (non-oxidative stage): step 1/1. This Lodderomyces elongisporus (strain ATCC 11503 / CBS 2605 / JCM 1781 / NBRC 1676 / NRRL YB-4239) (Yeast) protein is Ribose-5-phosphate isomerase (RKI1).